A 332-amino-acid chain; its full sequence is Tryptophan--tRNA ligase (332 aa).

ATP contacts are provided by residues 11 to 13 (TST) and 19 to 20 (GN). Positions 12–20 (STGKLTLGN) match the 'HIGH' region motif. L-tryptophan is bound at residue Asp-140. Residues 152 to 154 (GQD), Ile-191, and 200 to 204 (KMSKS) contribute to the ATP site. Residues 200–204 (KMSKS) carry the 'KMSKS' region motif.

This sequence belongs to the class-I aminoacyl-tRNA synthetase family. Homodimer.

It localises to the cytoplasm. It catalyses the reaction tRNA(Trp) + L-tryptophan + ATP = L-tryptophyl-tRNA(Trp) + AMP + diphosphate + H(+). Its function is as follows. Catalyzes the attachment of tryptophan to tRNA(Trp). The protein is Tryptophan--tRNA ligase of Mycoplasmopsis pulmonis (strain UAB CTIP) (Mycoplasma pulmonis).